A 282-amino-acid polypeptide reads, in one-letter code: Armadillo repeat-containing protein 1 (282 aa).

Met-1 carries the N-acetylmethionine modification. An ARM repeat occupies 39–81; sequence GCLPGLILFMDHPNPPVVHSALLALRYLAECRANREKMKGELG. A Phosphothreonine modification is found at Thr-137. A phosphoserine mark is found at Ser-189, Ser-246, Ser-260, and Ser-267. The segment at 239 to 261 is disordered; it reads DYLPEDESPTKEQDKAVSRVGSH. Over residues 246-255 the composition is skewed to basic and acidic residues; that stretch reads SPTKEQDKAV.

Interacts with mitochondrial contact site and cristae organizing system (MICOS) complex components IMMT/MIC60 and MICOS10/MIC10. Interacts with mitochondrial outer membrane sorting assembly machinery (SAM) complex components SAMM50 and MTX1.

Its subcellular location is the cytoplasm. It localises to the mitochondrion. The protein localises to the mitochondrion outer membrane. Its function is as follows. In association with mitochondrial contact site and cristae organizing system (MICOS) complex components and mitochondrial outer membrane sorting assembly machinery (SAM) complex components may regulate mitochondrial dynamics playing a role in determining mitochondrial length, distribution and motility. This is Armadillo repeat-containing protein 1 (Armc1) from Mus musculus (Mouse).